The following is a 948-amino-acid chain: Valine--tRNA ligase (948 aa).

The 'HIGH' region motif lies at 40-50 (PNVTGSLHMGH). A 'KMSKS' region motif is present at residues 551–555 (KMSKS). Lys-554 contacts ATP. Positions 879–945 (LIDKGAELAR…GKLAEQHARI (67 aa)) form a coiled coil.

The protein belongs to the class-I aminoacyl-tRNA synthetase family. ValS type 1 subfamily. Monomer.

Its subcellular location is the cytoplasm. The enzyme catalyses tRNA(Val) + L-valine + ATP = L-valyl-tRNA(Val) + AMP + diphosphate. In terms of biological role, catalyzes the attachment of valine to tRNA(Val). As ValRS can inadvertently accommodate and process structurally similar amino acids such as threonine, to avoid such errors, it has a 'posttransfer' editing activity that hydrolyzes mischarged Thr-tRNA(Val) in a tRNA-dependent manner. The sequence is that of Valine--tRNA ligase from Pseudomonas syringae pv. tomato (strain ATCC BAA-871 / DC3000).